Consider the following 226-residue polypeptide: 2-C-methyl-D-erythritol 4-phosphate cytidylyltransferase (226 aa).

The protein belongs to the IspD/TarI cytidylyltransferase family. IspD subfamily.

It carries out the reaction 2-C-methyl-D-erythritol 4-phosphate + CTP + H(+) = 4-CDP-2-C-methyl-D-erythritol + diphosphate. It functions in the pathway isoprenoid biosynthesis; isopentenyl diphosphate biosynthesis via DXP pathway; isopentenyl diphosphate from 1-deoxy-D-xylulose 5-phosphate: step 2/6. Its function is as follows. Catalyzes the formation of 4-diphosphocytidyl-2-C-methyl-D-erythritol from CTP and 2-C-methyl-D-erythritol 4-phosphate (MEP). The chain is 2-C-methyl-D-erythritol 4-phosphate cytidylyltransferase from Prochlorococcus marinus (strain MIT 9312).